A 435-amino-acid chain; its full sequence is Transcriptional enhancer factor TEF-5 (435 aa).

Polar residues predominate over residues 1-12 (MASNSWNASSSP). A disordered region spans residues 1 to 34 (MASNSWNASSSPGEAREDGPEGLDKGLDNDAEGV). Alanine 2 is modified (N-acetylalanine). Positions 14–28 (EAREDGPEGLDKGLD) are enriched in basic and acidic residues. A DNA-binding region (TEA) is located at residues 28 to 104 (DNDAEGVWSP…QVLARKKVRE (77 aa)). At serine 148 the chain carries Phosphoserine. The tract at residues 173-435 (GPSQDIKPFA…QHHVYKLVKD (263 aa)) is transcriptional activation.

In terms of assembly, interacts with YAP1 and WWTR1/TAZ. In terms of tissue distribution, preferentially expressed in the placenta.

It localises to the nucleus. Transcription factor which plays a key role in the Hippo signaling pathway, a pathway involved in organ size control and tumor suppression by restricting proliferation and promoting apoptosis. The core of this pathway is composed of a kinase cascade wherein MST1/MST2, in complex with its regulatory protein SAV1, phosphorylates and activates LATS1/2 in complex with its regulatory protein MOB1, which in turn phosphorylates and inactivates YAP1 oncoprotein and WWTR1/TAZ. Acts by mediating gene expression of YAP1 and WWTR1/TAZ, thereby regulating cell proliferation, migration and epithelial mesenchymal transition (EMT) induction. Binds to multiple functional elements of the human chorionic somatomammotropin-B gene enhancer. The chain is Transcriptional enhancer factor TEF-5 (TEAD3) from Homo sapiens (Human).